The primary structure comprises 550 residues: Hydroxylamine reductase (550 aa).

Cys-5, Cys-8, Cys-17, and Cys-23 together coordinate [4Fe-4S] cluster. His-250, Glu-274, Cys-319, Cys-405, Cys-433, Cys-458, Glu-492, and Lys-494 together coordinate hybrid [4Fe-2O-2S] cluster. Cysteine persulfide is present on Cys-405.

It belongs to the HCP family. The cofactor is [4Fe-4S] cluster. Hybrid [4Fe-2O-2S] cluster is required as a cofactor.

Its subcellular location is the cytoplasm. It catalyses the reaction A + NH4(+) + H2O = hydroxylamine + AH2 + H(+). Its function is as follows. Catalyzes the reduction of hydroxylamine to form NH(3) and H(2)O. This Geobacter sulfurreducens (strain ATCC 51573 / DSM 12127 / PCA) protein is Hydroxylamine reductase.